The following is a 459-amino-acid chain: UDP-N-acetylmuramoyl-tripeptide--D-alanyl-D-alanine ligase (459 aa).

121 to 127 (GSSGKTT) is a binding site for ATP.

This sequence belongs to the MurCDEF family. MurF subfamily.

Its subcellular location is the cytoplasm. It carries out the reaction D-alanyl-D-alanine + UDP-N-acetyl-alpha-D-muramoyl-L-alanyl-gamma-D-glutamyl-meso-2,6-diaminopimelate + ATP = UDP-N-acetyl-alpha-D-muramoyl-L-alanyl-gamma-D-glutamyl-meso-2,6-diaminopimeloyl-D-alanyl-D-alanine + ADP + phosphate + H(+). It participates in cell wall biogenesis; peptidoglycan biosynthesis. Involved in cell wall formation. Catalyzes the final step in the synthesis of UDP-N-acetylmuramoyl-pentapeptide, the precursor of murein. This is UDP-N-acetylmuramoyl-tripeptide--D-alanyl-D-alanine ligase from Treponema pallidum (strain Nichols).